Here is a 324-residue protein sequence, read N- to C-terminus: 33 kDa ribonucleoprotein, chloroplastic (324 aa).

A chloroplast-targeting transit peptide spans 1-71 (MSGCCFSFAA…YRSSIFLSTC (71 aa)). RRM domains are found at residues 114 to 192 (GRLY…FPEV) and 217 to 296 (HKLY…AGQK). Positions 294-324 (GQKAPVSSPPVVETSPENDSDNSELLSSLSS) are disordered. Low complexity predominate over residues 298 to 308 (PVSSPPVVETS).

The protein localises to the plastid. It is found in the chloroplast. Functionally, could be involved in splicing and/or processing of chloroplast RNA's. The chain is 33 kDa ribonucleoprotein, chloroplastic from Nicotiana sylvestris (Wood tobacco).